The primary structure comprises 214 residues: Adenylate kinase (214 aa).

Residue 10–15 participates in ATP binding; sequence GAGKGT. Positions 30-59 are NMP; that stretch reads STGDMLRAAVKAQSELGRQAKALMDAGKLV. Residues Thr-31, Arg-36, 57–59, 85–88, and Gln-92 each bind AMP; these read KLV and GFPR. The LID stretch occupies residues 122-159; sequence GRRVHAPSGRVYHVKFNPPKQEGKDDVTGELLTSRKDD. ATP is bound by residues Arg-123 and 132–133; that span reads VY. Positions 156 and 167 each coordinate AMP. Arg-200 serves as a coordination point for ATP.

Belongs to the adenylate kinase family. Monomer.

Its subcellular location is the cytoplasm. The catalysed reaction is AMP + ATP = 2 ADP. The protein operates within purine metabolism; AMP biosynthesis via salvage pathway; AMP from ADP: step 1/1. Functionally, catalyzes the reversible transfer of the terminal phosphate group between ATP and AMP. Plays an important role in cellular energy homeostasis and in adenine nucleotide metabolism. This is Adenylate kinase from Sodalis glossinidius (strain morsitans).